The sequence spans 432 residues: MGQSVVILGTQWGDEGKGKIVDLLTDKAQFVVRYQGGHNAGHTLVIDGKKTVLHLIPSGILRDNCKCIIGNGVVLAPDALLKEMNELESSGYPVRDRLFLSEACPLILPYHVALDKARELARGNKAIGTTGRGIGPAYEDKVARRGLRVGDLFNMDTFAEKLKEVMTYHNFQLTQFYGVEAVSYEDVLAAVKEYASLLISMVVDVTEMLDQARKRGDKIMFEGAQGTLLDIDHGTYPYVTSSNTTAGGVATGSGYGPRFVEYVLGIAKAYTTRVGGGPFPTELFDDVGENLCARGHEYGATTGRKRRCGWFDAVAMKRAIQINSISGFCLTKLDVLDGLDEVKICIGYKGEDGTVRDVPPMAADGYDLVTPVYESMPGWKENTFGVKSIADLPQAAINYIHRIEAITGVPIDIISTGPDRDETMILRHPFAD.

GTP is bound by residues Gly13–Lys19 and Gly41–Thr43. Asp14 acts as the Proton acceptor in catalysis. Mg(2+) contacts are provided by Asp14 and Gly41. IMP-binding positions include Asp14–Lys17, Asn39–His42, Thr130, Arg144, Gln225, Thr240, and Arg304. His42 functions as the Proton donor in the catalytic mechanism. Position 300 to 306 (Ala300 to Arg306) interacts with substrate. GTP is bound by residues Arg306, Lys332–Asp334, and Ser415–Gly417.

This sequence belongs to the adenylosuccinate synthetase family. In terms of assembly, homodimer. It depends on Mg(2+) as a cofactor.

It is found in the cytoplasm. The catalysed reaction is IMP + L-aspartate + GTP = N(6)-(1,2-dicarboxyethyl)-AMP + GDP + phosphate + 2 H(+). It functions in the pathway purine metabolism; AMP biosynthesis via de novo pathway; AMP from IMP: step 1/2. In terms of biological role, plays an important role in the de novo pathway of purine nucleotide biosynthesis. Catalyzes the first committed step in the biosynthesis of AMP from IMP. In Tolumonas auensis (strain DSM 9187 / NBRC 110442 / TA 4), this protein is Adenylosuccinate synthetase.